The sequence spans 647 residues: Threonine--tRNA ligase (647 aa).

Positions Met-1–Thr-61 constitute a TGS domain. The tract at residues Asp-242 to Pro-540 is catalytic. Cys-336, His-387, and His-517 together coordinate Zn(2+).

The protein belongs to the class-II aminoacyl-tRNA synthetase family. Homodimer. Zn(2+) serves as cofactor.

The protein localises to the cytoplasm. The enzyme catalyses tRNA(Thr) + L-threonine + ATP = L-threonyl-tRNA(Thr) + AMP + diphosphate + H(+). Its function is as follows. Catalyzes the attachment of threonine to tRNA(Thr) in a two-step reaction: L-threonine is first activated by ATP to form Thr-AMP and then transferred to the acceptor end of tRNA(Thr). Also edits incorrectly charged L-seryl-tRNA(Thr). This chain is Threonine--tRNA ligase, found in Streptococcus sanguinis (strain SK36).